The sequence spans 864 residues: Alanine--tRNA ligase (864 aa).

Residues H553, H557, C655, and H659 each contribute to the Zn(2+) site. The disordered stretch occupies residues 828–847; sequence VGGKGGGRPDMAQAGGKDPS.

The protein belongs to the class-II aminoacyl-tRNA synthetase family. It depends on Zn(2+) as a cofactor.

It localises to the cytoplasm. The enzyme catalyses tRNA(Ala) + L-alanine + ATP = L-alanyl-tRNA(Ala) + AMP + diphosphate. Its function is as follows. Catalyzes the attachment of alanine to tRNA(Ala) in a two-step reaction: alanine is first activated by ATP to form Ala-AMP and then transferred to the acceptor end of tRNA(Ala). Also edits incorrectly charged Ser-tRNA(Ala) and Gly-tRNA(Ala) via its editing domain. In Hydrogenovibrio crunogenus (strain DSM 25203 / XCL-2) (Thiomicrospira crunogena), this protein is Alanine--tRNA ligase.